Reading from the N-terminus, the 565-residue chain is Adenine deaminase (565 aa).

Belongs to the metallo-dependent hydrolases superfamily. Adenine deaminase family. Mn(2+) is required as a cofactor.

It catalyses the reaction adenine + H2O + H(+) = hypoxanthine + NH4(+). This is Adenine deaminase from Methylobacterium nodulans (strain LMG 21967 / CNCM I-2342 / ORS 2060).